A 446-amino-acid polypeptide reads, in one-letter code: Exopolygalacturonase (446 aa).

The N-terminal stretch at 1 to 17 (MRVTDIISCALLQASIA) is a signal peptide. Residues Asn53, Asn118, Asn134, and Asn204 are each glycosylated (N-linked (GlcNAc...) asparagine). A PbH1 1 repeat occupies 236–257 (SDNIIIQNSNINNGDDCVSFKP). Asp250 (proton donor) is an active-site residue. Cys252 and Cys269 are oxidised to a cystine. Asn258 and Asn270 each carry an N-linked (GlcNAc...) asparagine glycan. 3 PbH1 repeats span residues 259 to 279 (STNILVQNLVCNGSHGISVGS), 290 to 311 (VENILVRNISMSNASDGARIKV), and 332 to 353 (VRNVTYDGMIVKNVDYAIEITQ). Residue His273 is part of the active site. 5 N-linked (GlcNAc...) asparagine glycosylation sites follow: Asn297, Asn302, Asn334, Asn359, and Asn369. PbH1 repeat units follow at residues 367 to 398 (PSNLTISDITIKNFKGTTSKKYDPRVGYVVCS) and 403 to 434 (CSDISIENIDVKSPSGTNLFTCANAEGIQSQV). 2 cysteine pairs are disulfide-bonded: Cys397-Cys403 and Cys424-Cys436. N-linked (GlcNAc...) asparagine glycosylation occurs at Asn435.

This sequence belongs to the glycosyl hydrolase 28 family.

It is found in the secreted. It carries out the reaction [(1-&gt;4)-alpha-D-galacturonosyl](n) + H2O = alpha-D-galacturonate + [(1-&gt;4)-alpha-D-galacturonosyl](n-1). Functionally, hydrolysis of 1,4-alpha-D-galactosiduronic linkages in pectate and other galacturonans. This is Exopolygalacturonase (PGX1) from Cochliobolus carbonum (Maize leaf spot fungus).